The chain runs to 359 residues: Peptide chain release factor 1 (359 aa).

Position 236 is an N5-methylglutamine (glutamine 236).

Belongs to the prokaryotic/mitochondrial release factor family. In terms of processing, methylated by PrmC. Methylation increases the termination efficiency of RF1.

It localises to the cytoplasm. Peptide chain release factor 1 directs the termination of translation in response to the peptide chain termination codons UAG and UAA. This chain is Peptide chain release factor 1, found in Streptococcus pneumoniae (strain Hungary19A-6).